A 304-amino-acid chain; its full sequence is Murein tetrapeptide carboxypeptidase (304 aa).

The active-site Nucleophile is S106. Residues E200 and H270 each act as charge relay system in the active site.

This sequence belongs to the peptidase S66 family.

It localises to the cytoplasm. The enzyme catalyses N-acetyl-D-glucosaminyl-N-acetylmuramoyl-L-alanyl-meso-2,6-diaminoheptanedioyl-D-alanine + H2O = N-acetyl-D-glucosaminyl-N-acetylmuramoyl-L-alanyl-meso-2,6-diaminoheptanedioate + D-alanine. It participates in cell wall biogenesis; peptidoglycan recycling. In terms of biological role, releases the terminal D-alanine residue from the cytoplasmic tetrapeptide recycling product L-Ala-gamma-D-Glu-meso-Dap-D-Ala. Can also cleave D-Ala from murein derivatives containing the tetrapeptide, i.e. MurNAc-tetrapeptide, UDP-MurNAc-tetrapeptide, GlcNAc-MurNAc-tetrapeptide, and GlcNAc-anhMurNAc-tetrapeptide. Does not act on murein sacculi or cross-linked muropeptides. The tripeptides produced by the LcdA reaction can then be reused as peptidoglycan building blocks; LcdA is thereby involved in murein recycling. The polypeptide is Murein tetrapeptide carboxypeptidase (ldcA) (Escherichia coli O157:H7).